The following is a 174-amino-acid chain: Large ribosomal subunit protein uL10 (174 aa).

The protein belongs to the universal ribosomal protein uL10 family. In terms of assembly, part of the ribosomal stalk of the 50S ribosomal subunit. The N-terminus interacts with L11 and the large rRNA to form the base of the stalk. The C-terminus forms an elongated spine to which L12 dimers bind in a sequential fashion forming a multimeric L10(L12)X complex.

In terms of biological role, forms part of the ribosomal stalk, playing a central role in the interaction of the ribosome with GTP-bound translation factors. The polypeptide is Large ribosomal subunit protein uL10 (Trichlorobacter lovleyi (strain ATCC BAA-1151 / DSM 17278 / SZ) (Geobacter lovleyi)).